The chain runs to 357 residues: NADH-quinone oxidoreductase subunit H (357 aa).

Transmembrane regions (helical) follow at residues 26–46 (LVKIIAVVAPLMGAVAYLTLW), 92–112 (ALFVIAPIMTIMPALAAWAVI), 127–147 (LLFVMAITSLEVYGVIVAGWA), 164–184 (MISYEIAMGFVLVIILMVTGS), 203–223 (GLTFLSWNWLPLLPMFFIYII), 259–279 (FFLAEYANMWLISIMATLMFL), 294–314 (VPGWIWLGLKTLMVVTMFIWF), and 329–349 (LGWKVFIPLTLVYLLIVAIWM).

This sequence belongs to the complex I subunit 1 family. In terms of assembly, NDH-1 is composed of 14 different subunits. Subunits NuoA, H, J, K, L, M, N constitute the membrane sector of the complex.

It localises to the cell inner membrane. The catalysed reaction is a quinone + NADH + 5 H(+)(in) = a quinol + NAD(+) + 4 H(+)(out). Its function is as follows. NDH-1 shuttles electrons from NADH, via FMN and iron-sulfur (Fe-S) centers, to quinones in the respiratory chain. The immediate electron acceptor for the enzyme in this species is believed to be ubiquinone. Couples the redox reaction to proton translocation (for every two electrons transferred, four hydrogen ions are translocated across the cytoplasmic membrane), and thus conserves the redox energy in a proton gradient. This subunit may bind ubiquinone. The sequence is that of NADH-quinone oxidoreductase subunit H from Janthinobacterium sp. (strain Marseille) (Minibacterium massiliensis).